The primary structure comprises 224 residues: Prolactin-3D1 (224 aa).

Positions M1–S29 are cleaved as a signal peptide. Disulfide bonds link C81/C199 and C216/C224. 2 N-linked (GlcNAc...) asparagine glycosylation sites follow: N109 and N158.

This sequence belongs to the somatotropin/prolactin family.

It localises to the secreted. This chain is Prolactin-3D1 (Prl3d1), found in Mus musculus (Mouse).